Reading from the N-terminus, the 520-residue chain is MTEISILNDVQKIIVLDYGSQYNQLIARRIREFGVLSELKSHKITAQELHEINPIGIVLSGGPNSVYADNAFGIDPEIFELGIPILGICYGMQLITHKLGGKVVPAGQAGNREYGQSTLHLRETSKLFSGTPQEQLVLMSHGDAVTEIPEGFHLVGDSNDCPYAAIENTEKNLYGIQFHPEVRHSVYGNDILKNFAISICGARGDWSMDNFIDMEITKIRETVGDRKVLLGLSGGVDSSVVGVLLQKAIGDQLTCIFVDHGLLRKDEGDQVMGMLGGKFGLNIIRVDASKRFLDLLADVEDPEKKRKIIGNEFVYVFDDEASKLKGVDFLAQGTLYTDIIESGTETAQTIKSHHNVGGLPEDMQFELIEPLNTLFKDEVRALGIALGMPEEIVWRQPFPGPGLAIRVMGAITEEKLETVRESDAILREEIAKAGLDRDVWQYFTVNTGVRSVGVMGDGRTYDYTIAIRAITSIDGMTADFAQLPWDVLKKISTRIVNEVDHVNRIVYDITSKPPATVEWE.

The region spanning 12–205 is the Glutamine amidotransferase type-1 domain; it reads KIIVLDYGSQ…AISICGARGD (194 aa). The Nucleophile role is filled by Cys89. Residues His179 and Glu181 contribute to the active site. Residues 206-395 enclose the GMPS ATP-PPase domain; the sequence is WSMDNFIDME…LGMPEEIVWR (190 aa). Position 233–239 (233–239) interacts with ATP; it reads SGGVDSS.

Homodimer.

It catalyses the reaction XMP + L-glutamine + ATP + H2O = GMP + L-glutamate + AMP + diphosphate + 2 H(+). It functions in the pathway purine metabolism; GMP biosynthesis; GMP from XMP (L-Gln route): step 1/1. Functionally, catalyzes the synthesis of GMP from XMP. This is GMP synthase [glutamine-hydrolyzing] from Streptococcus pyogenes serotype M2 (strain MGAS10270).